A 235-amino-acid polypeptide reads, in one-letter code: MGMAAAGGYGRVLWLHGSGQTGEESRAQVAPYFAAPELASVRFSFPTAPTSSIPCYGGEVITAWFAIPEVPITARTARDEKEVLKAVERVHEMLDGEVAAGTSPSNIFVCGLSQGGALAIASVLLYPMTLGGCVVFSGSLPLSKTFAESIPSEARKTPVLWFHGMADGVVLFEAGHAGCAFLQEIGMHCEFKAYPALGHTLVDEELQYFRQWIKDRLSQGTGVPVPSLSDKMDLQ.

Residues Ser-113, Asp-167, and His-199 each act as charge relay system in the active site.

This sequence belongs to the AB hydrolase superfamily. AB hydrolase 2 family.

Its function is as follows. Possesses carboxylesterase activity in vitro. This Oryza sativa subsp. japonica (Rice) protein is Probable carboxylesterase Os04g0669600.